Reading from the N-terminus, the 998-residue chain is 2-imino-3-(indol-3-yl)propanoate dimerase (998 aa).

It catalyses the reaction 2 H2O2 = O2 + 2 H2O. It carries out the reaction 2 2-iminio-3-(indol-3-yl)propanoate + H2O2 = indole-3-pyruvate imine dimer + 2 H2O. The protein operates within pigment biosynthesis; violacein biosynthesis. Functionally, catalyzes the hydrogen peroxide-dependent dimerization of two L-tryptophan-derived molecules (imine form of indole 3-pyruvate (IPA)), to form an uncharacterized product suggested to be indole-3-pyruvate imine dimer that can spontaneously convert into dichlorochromopyrrolate (CPA). The uncharacterized product is the substrate of VioE. This chain is 2-imino-3-(indol-3-yl)propanoate dimerase (vioB), found in Chromobacterium violaceum (strain ATCC 12472 / DSM 30191 / JCM 1249 / CCUG 213 / NBRC 12614 / NCIMB 9131 / NCTC 9757 / MK).